The following is a 109-amino-acid chain: Hainantoxin-XVIII-7 (109 aa).

Residues 1-18 (MKLSIIIIATSLVIAVVA) form the signal peptide. The propeptide occupies 19–46 (FPSKDSKAIENDKTEQRMEIVVQETARA). Intrachain disulfides connect cysteine 47/cysteine 62, cysteine 55/cysteine 68, cysteine 59/cysteine 108, and cysteine 61/cysteine 81.

This sequence belongs to the neurotoxin 25 family. F7 subfamily. In terms of tissue distribution, expressed by the venom gland.

The protein localises to the secreted. Functionally, putative ion channel inhibitor. This chain is Hainantoxin-XVIII-7, found in Cyriopagopus hainanus (Chinese bird spider).